Here is a 578-residue protein sequence, read N- to C-terminus: Lipoprotein A (578 aa).

The first 27 residues, 1–27, serve as a signal peptide directing secretion; it reads MNKKYFKKYSWVLILSTSILAPMTLAS. Cys28 carries the N-palmitoyl cysteine lipid modification. Residue Cys28 is the site of S-diacylglycerol cysteine attachment. Disordered stretches follow at residues 35–135 and 172–203; these read KEDK…NTSA and AKDDSKEKSKNSSNLNLKTPVENRQNKNEVKD. Residues 41–50 are compositionally biased toward polar residues; it reads NDSSNLSNKT. Residues 51–74 are compositionally biased toward basic and acidic residues; that stretch reads NKSDPNDHLKDKDKNVSQDNKDST. Over residues 75 to 96 the composition is skewed to polar residues; sequence NKAVSNENSQTQSQKTNESSQN. Residues 108 to 119 show a composition bias toward low complexity; the sequence is ITNQNSSSNTKS. The span at 172–181 shows a compositional bias: basic and acidic residues; it reads AKDDSKEKSK.

It belongs to the M.pulmonis LipAB lipoprotein family.

It localises to the cell membrane. In Mycoplasmopsis pulmonis (strain UAB CTIP) (Mycoplasma pulmonis), this protein is Lipoprotein A (lipA).